A 397-amino-acid chain; its full sequence is Elongation factor Tu (397 aa).

The tr-type G domain occupies 10–207; that stretch reads KPHCNIGTIG…EVDKYIPQPE (198 aa). The tract at residues 19–26 is G1; it reads GHVDHGKT. 19–26 provides a ligand contact to GTP; the sequence is GHVDHGKT. Threonine 26 contributes to the Mg(2+) binding site. The segment at 61-65 is G2; the sequence is GITIS. Residues 82–85 are G3; that stretch reads DCPG. GTP contacts are provided by residues 82–86 and 137–140; these read DCPGH and NKCD. The interval 137–140 is G4; that stretch reads NKCD. Residues 175-177 are G5; the sequence is SAL.

This sequence belongs to the TRAFAC class translation factor GTPase superfamily. Classic translation factor GTPase family. EF-Tu/EF-1A subfamily. As to quaternary structure, monomer.

The protein localises to the cytoplasm. The enzyme catalyses GTP + H2O = GDP + phosphate + H(+). Its function is as follows. GTP hydrolase that promotes the GTP-dependent binding of aminoacyl-tRNA to the A-site of ribosomes during protein biosynthesis. The polypeptide is Elongation factor Tu (Azorhizobium caulinodans (strain ATCC 43989 / DSM 5975 / JCM 20966 / LMG 6465 / NBRC 14845 / NCIMB 13405 / ORS 571)).